The sequence spans 407 residues: ATP phosphoribosyltransferase regulatory subunit (407 aa).

It belongs to the class-II aminoacyl-tRNA synthetase family. HisZ subfamily. Heteromultimer composed of HisG and HisZ subunits.

The protein resides in the cytoplasm. It functions in the pathway amino-acid biosynthesis; L-histidine biosynthesis; L-histidine from 5-phospho-alpha-D-ribose 1-diphosphate: step 1/9. In terms of biological role, required for the first step of histidine biosynthesis. May allow the feedback regulation of ATP phosphoribosyltransferase activity by histidine. The sequence is that of ATP phosphoribosyltransferase regulatory subunit from Rippkaea orientalis (strain PCC 8801 / RF-1) (Cyanothece sp. (strain PCC 8801)).